We begin with the raw amino-acid sequence, 159 residues long: Odorant-binding protein (159 aa).

The protein belongs to the calycin superfamily. Lipocalin family. In terms of assembly, homodimer.

The protein localises to the secreted. Its function is as follows. This protein binds a wide variety of chemical odorants. The sequence is that of Odorant-binding protein from Bos taurus (Bovine).